Here is an 88-residue protein sequence, read N- to C-terminus: uncharacterized protein (88 aa).

This is an uncharacterized protein from Sulfolobus islandicus filamentous virus (isolate Iceland/Hveragerdi) (SIFV).